We begin with the raw amino-acid sequence, 560 residues long: NAD-dependent malic enzyme (560 aa).

Y100 serves as the catalytic Proton donor. NAD(+) is bound at residue R153. Residue K171 is the Proton acceptor of the active site. A divalent metal cation is bound by residues E242, D243, and D266. NAD(+) contacts are provided by D266 and N413.

This sequence belongs to the malic enzymes family. Homotetramer. The cofactor is Mg(2+). Mn(2+) serves as cofactor.

The catalysed reaction is (S)-malate + NAD(+) = pyruvate + CO2 + NADH. It carries out the reaction oxaloacetate + H(+) = pyruvate + CO2. The protein is NAD-dependent malic enzyme of Psychrobacter arcticus (strain DSM 17307 / VKM B-2377 / 273-4).